The sequence spans 502 residues: Maturase K (502 aa).

Belongs to the intron maturase 2 family. MatK subfamily.

It is found in the plastid. It localises to the chloroplast. Functionally, usually encoded in the trnK tRNA gene intron. Probably assists in splicing its own and other chloroplast group II introns. In Fremontodendron californicum (California flannelbush), this protein is Maturase K.